A 188-amino-acid chain; its full sequence is GTP cyclohydrolase 1 (188 aa).

Zn(2+) contacts are provided by C78, H81, and C150.

This sequence belongs to the GTP cyclohydrolase I family. As to quaternary structure, toroid-shaped homodecamer, composed of two pentamers of five dimers.

It catalyses the reaction GTP + H2O = 7,8-dihydroneopterin 3'-triphosphate + formate + H(+). The protein operates within cofactor biosynthesis; 7,8-dihydroneopterin triphosphate biosynthesis; 7,8-dihydroneopterin triphosphate from GTP: step 1/1. This is GTP cyclohydrolase 1 from Geobacillus kaustophilus (strain HTA426).